Consider the following 365-residue polypeptide: Aminotransferase poxL (365 aa).

Arg92 provides a ligand contact to pyridoxal 5'-phosphate. Position 193 is an N6-(pyridoxal phosphate)lysine (Lys193). Glu229 contributes to the pyridoxal 5'-phosphate binding site.

This sequence belongs to the class-IV pyridoxal-phosphate-dependent aminotransferase family. Pyridoxal 5'-phosphate serves as cofactor.

The protein operates within secondary metabolite biosynthesis. Functionally, aminotransferase; part of the gene cluster that mediates the biosynthesis of oxaleimides, cytotoxic compounds containing an unusual disubstituted succinimide moiety. The first step of the pathway is provided by the HR-PKS poxF that serves in a new mode of collaborative biosynthesis with the PKS-NRPS poxE, by providing the olefin containing amino acid substrate via the synthesis of an ACP-bound dec-4-enoate. The cytochrome P450 monooxygenase poxM-catalyzed oxidation at the alpha-position creates the enzyme-bound 2-hydroxydec-4-enoyl-ACP thioester, which may be prone to spontaneous hydrolysis to yield 2-hydroxydec-4-enoic acid due to increased electrophilicity of the carbonyl. 2-hydroxydec-4-enoic acid can then be further oxidized by poxM to yield the alpha-ketoacid 2-oxodec-4-enoicacid, which is reductively aminated by the aminotransferase poxL to yield (S,E)-2-aminodec-4-enoic acid. The Hybrid PKS-NRPS synthetase poxE then performs condensation between the octaketide product of its PKS modules and the amino group of (S,E)-2-aminodec-4-enoic acid which is activated and incorporated by the adenylation domain. The resulting aminoacyl product can be cyclized by the Diels-Alderase PoxQ and reductively released by the reductive (R) domain of poxE to yield an aldehyde intermediate. The released aldehyde is then substrate for a Knoevenagel condensation by the hydrolyase poxO followed by an oxidation at the 5-position of the pyrrolidone ring. The presence of the olefin from the amino acid building block allows for migration of the substituted allyl group to occur. This allylic transposition reaction takes place in a conjugate addition, semipinacol-like fashion to yield a succinimide intermediate. Iterative two-electron oxidations of the C7 methyl of the succinimide intermediate to the carboxylic acid can be catalyzed by one of two remaining cytochrome P450 monooxygenasess poxC or poxD to yield oxaleimide A. Subsequent oxidation yields the maleimide scaffold oxaleimide I. Both oxaleimide A and oxaleimide I can undergo oxidative modifications in the decalin ring to yield the series of products oxaleimides B to H. The protein is Aminotransferase poxL of Penicillium oxalicum.